A 100-amino-acid chain; its full sequence is Nucleoid-associated protein Cagg_3200 (100 aa).

The protein belongs to the YbaB/EbfC family. As to quaternary structure, homodimer.

It localises to the cytoplasm. The protein resides in the nucleoid. Functionally, binds to DNA and alters its conformation. May be involved in regulation of gene expression, nucleoid organization and DNA protection. This is Nucleoid-associated protein Cagg_3200 from Chloroflexus aggregans (strain MD-66 / DSM 9485).